The following is a 333-amino-acid chain: 4-hydroxyproline epimerase (333 aa).

The active-site Proton acceptor is the Cys-90. Residues 91-92 and Asp-249 each bind substrate; that span reads GH. The active-site Proton donor is Cys-253. Residue 254–255 coordinates substrate; the sequence is GT.

This sequence belongs to the proline racemase family. As to quaternary structure, homodimer.

It catalyses the reaction trans-4-hydroxy-L-proline = cis-4-hydroxy-D-proline. Inhibited by iodoacetate, iodoacetamide and by high amounts (10 mM) of pyrrole-2-carboxylic acid (PYC). Not inhibited by PYC at 1 mM. Its function is as follows. Allows intracellular utilization of 4-hydroxyproline, one of the major constituents of host collagen, by converting 4-hydroxy-L-proline to 4-hydroxy-D-proline, which can be further metabolized by intracellular 4-hydroxy-D-proline oxidases. Strong B-cell mitogen. Plays an important role in the regulation of intra- and extracellular amino acid pools, allowing the bacterium to profit from host precursors and enzymatic pathways. This chain is 4-hydroxyproline epimerase, found in Brucella melitensis biotype 1 (strain ATCC 23456 / CCUG 17765 / NCTC 10094 / 16M).